The following is a 155-amino-acid chain: 6,7-dimethyl-8-ribityllumazine synthase (155 aa).

5-amino-6-(D-ribitylamino)uracil-binding positions include F18, A49 to E51, and C75 to I77. E80–T81 is a (2S)-2-hydroxy-3-oxobutyl phosphate binding site. Catalysis depends on H83, which acts as the Proton donor. N108 lines the 5-amino-6-(D-ribitylamino)uracil pocket. R122 provides a ligand contact to (2S)-2-hydroxy-3-oxobutyl phosphate.

Belongs to the DMRL synthase family.

It catalyses the reaction (2S)-2-hydroxy-3-oxobutyl phosphate + 5-amino-6-(D-ribitylamino)uracil = 6,7-dimethyl-8-(1-D-ribityl)lumazine + phosphate + 2 H2O + H(+). It functions in the pathway cofactor biosynthesis; riboflavin biosynthesis; riboflavin from 2-hydroxy-3-oxobutyl phosphate and 5-amino-6-(D-ribitylamino)uracil: step 1/2. Catalyzes the formation of 6,7-dimethyl-8-ribityllumazine by condensation of 5-amino-6-(D-ribitylamino)uracil with 3,4-dihydroxy-2-butanone 4-phosphate. This is the penultimate step in the biosynthesis of riboflavin. This chain is 6,7-dimethyl-8-ribityllumazine synthase, found in Bartonella henselae (strain ATCC 49882 / DSM 28221 / CCUG 30454 / Houston 1) (Rochalimaea henselae).